The sequence spans 689 residues: Protein asunder (689 aa).

Residues 521-550 adopt a coiled-coil conformation; sequence NGARLKLSKAKDQYRLLYRELEQLIQLNAT. The tract at residues 578 to 619 is disordered; that stretch reads GASLLRSYTESPLSPERLEPITSGSASGSSNSNSLLKASKRR. Low complexity predominate over residues 600 to 614; the sequence is SGSASGSSNSNSLLK. The Nuclear localization signal (NLS) motif lies at 613-619; the sequence is LKASKRR.

The protein belongs to the Integrator subunit 13 family. As to quaternary structure, belongs to the multiprotein complex Integrator, at least composed of IntS1, IntS2, IntS3, IntS4, omd/IntS5, IntS6, defl/IntS7, IntS8, IntS9, IntS10, IntS11, IntS12, asun/IntS13, IntS14 and IntS15. The core complex associates with protein phosphatase 2A subunits mts/PP2A and Pp2A-29B, to form the Integrator-PP2A (INTAC) complex. Post-translationally, phosphorylated.

It localises to the nucleus. The protein resides in the cytoplasm. It is found in the perinuclear region. In terms of biological role, component of the integrator complex, a multiprotein complex that terminates RNA polymerase II (Pol II) transcription in the promoter-proximal region of genes. The integrator complex provides a quality checkpoint during transcription elongation by driving premature transcription termination of transcripts that are unfavorably configured for transcriptional elongation: the complex terminates transcription by (1) catalyzing dephosphorylation of the C-terminal domain (CTD) of Pol II subunit Polr2A/Rbp1 and Spt5, and (2) degrading the exiting nascent RNA transcript via endonuclease activity. The integrator complex is also involved in the 3'-end processing of the U7 snRNA, and also the spliceosomal snRNAs U1, U2, U4 and U5. The sequence is that of Protein asunder (asun) from Drosophila erecta (Fruit fly).